The sequence spans 108 residues: UPF0060 membrane protein YnfA (108 aa).

Residues 1–5 (MIKTT) are Periplasmic-facing. Residues 6-26 (LLFFATALCEIIGCFLPWLWL) form a helical membrane-spanning segment. The Cytoplasmic portion of the chain corresponds to 27–30 (KRNA). Residues 31–51 (SIWLLLPAGISLALFVWLLTL) traverse the membrane as a helical segment. Residues 52-60 (HPAASGRVY) are Periplasmic-facing. A helical transmembrane segment spans residues 61–81 (AAYGGVYVCTALMWLRVVDGV). Residues 82-84 (KLT) lie on the Cytoplasmic side of the membrane. The helical transmembrane segment at 85 to 105 (LYDWTGALIALCGMLIIVAGW) threads the bilayer. Topologically, residues 106–108 (GRT) are periplasmic.

The protein belongs to the UPF0060 family.

It localises to the cell inner membrane. The sequence is that of UPF0060 membrane protein YnfA from Escherichia coli O139:H28 (strain E24377A / ETEC).